We begin with the raw amino-acid sequence, 872 residues long: Alanine--tRNA ligase (872 aa).

Zn(2+) is bound by residues His-567, His-571, Cys-669, and His-673.

Belongs to the class-II aminoacyl-tRNA synthetase family. Requires Zn(2+) as cofactor.

The protein resides in the cytoplasm. It catalyses the reaction tRNA(Ala) + L-alanine + ATP = L-alanyl-tRNA(Ala) + AMP + diphosphate. Catalyzes the attachment of alanine to tRNA(Ala) in a two-step reaction: alanine is first activated by ATP to form Ala-AMP and then transferred to the acceptor end of tRNA(Ala). Also edits incorrectly charged Ser-tRNA(Ala) and Gly-tRNA(Ala) via its editing domain. This is Alanine--tRNA ligase from Streptococcus pyogenes serotype M6 (strain ATCC BAA-946 / MGAS10394).